Consider the following 692-residue polypeptide: Elongation factor G (692 aa).

One can recognise a tr-type G domain in the interval 8–282; the sequence is EKTRNIGIMA…AVIDYLPSPL (275 aa). GTP is bound by residues 17–24, 81–85, and 135–138; these read AHVDAGKT, DTPGH, and NKMD.

It belongs to the TRAFAC class translation factor GTPase superfamily. Classic translation factor GTPase family. EF-G/EF-2 subfamily.

The protein resides in the cytoplasm. Functionally, catalyzes the GTP-dependent ribosomal translocation step during translation elongation. During this step, the ribosome changes from the pre-translocational (PRE) to the post-translocational (POST) state as the newly formed A-site-bound peptidyl-tRNA and P-site-bound deacylated tRNA move to the P and E sites, respectively. Catalyzes the coordinated movement of the two tRNA molecules, the mRNA and conformational changes in the ribosome. In Streptococcus agalactiae serotype III (strain NEM316), this protein is Elongation factor G.